The chain runs to 391 residues: Stearoyl-[acyl-carrier-protein] 9-desaturase 6, chloroplastic (391 aa).

The N-terminal 38 residues, 1–38, are a transit peptide targeting the chloroplast; sequence MLAHKSLLSFTTQWATLMPSPSTFLASRPRGPAKISAV. The Fe cation site is built by E130, E168, H171, E221, E254, and H257.

This sequence belongs to the fatty acid desaturase type 2 family. Homodimer. Requires Fe(2+) as cofactor.

The protein localises to the plastid. It is found in the chloroplast. It carries out the reaction octadecanoyl-[ACP] + 2 reduced [2Fe-2S]-[ferredoxin] + O2 + 2 H(+) = (9Z)-octadecenoyl-[ACP] + 2 oxidized [2Fe-2S]-[ferredoxin] + 2 H2O. It functions in the pathway lipid metabolism; fatty acid metabolism. Functionally, converts stearoyl-ACP to oleoyl-ACP by introduction of a cis double bond between carbons 9 and 10 of the acyl chain. This chain is Stearoyl-[acyl-carrier-protein] 9-desaturase 6, chloroplastic (S-ACP-DES6), found in Arabidopsis thaliana (Mouse-ear cress).